A 273-amino-acid polypeptide reads, in one-letter code: Ribosomal RNA small subunit methyltransferase A (273 aa).

S-adenosyl-L-methionine contacts are provided by asparagine 18, leucine 20, glycine 45, glutamate 66, aspartate 91, and asparagine 113.

It belongs to the class I-like SAM-binding methyltransferase superfamily. rRNA adenine N(6)-methyltransferase family. RsmA subfamily.

Its subcellular location is the cytoplasm. The enzyme catalyses adenosine(1518)/adenosine(1519) in 16S rRNA + 4 S-adenosyl-L-methionine = N(6)-dimethyladenosine(1518)/N(6)-dimethyladenosine(1519) in 16S rRNA + 4 S-adenosyl-L-homocysteine + 4 H(+). Functionally, specifically dimethylates two adjacent adenosines (A1518 and A1519) in the loop of a conserved hairpin near the 3'-end of 16S rRNA in the 30S particle. May play a critical role in biogenesis of 30S subunits. This Escherichia coli O157:H7 protein is Ribosomal RNA small subunit methyltransferase A.